We begin with the raw amino-acid sequence, 393 residues long: Putative mitogen-activated protein kinase kinase kinase 7-like (393 aa).

In terms of domain architecture, Protein kinase spans 11–266 (KLSEKFLGAG…PSMKEIEKFL (256 aa)). ATP contacts are provided by residues 17-25 (LGAGSGGAV) and K38. The active-site Proton acceptor is the D133. The disordered stretch occupies residues 339–379 (AAADGDREVRRAEKDTERETSRAAHNGERETRRAGQDVGRE).

The protein belongs to the protein kinase superfamily. STE Ser/Thr protein kinase family. MAP kinase kinase kinase subfamily. Mg(2+) is required as a cofactor.

The enzyme catalyses L-seryl-[protein] + ATP = O-phospho-L-seryl-[protein] + ADP + H(+). It carries out the reaction L-threonyl-[protein] + ATP = O-phospho-L-threonyl-[protein] + ADP + H(+). The polypeptide is Putative mitogen-activated protein kinase kinase kinase 7-like (Takl1) (Drosophila melanogaster (Fruit fly)).